A 276-amino-acid polypeptide reads, in one-letter code: NH(3)-dependent NAD(+) synthetase (276 aa).

Position 43–50 (43–50 (GISGGVDS)) interacts with ATP. Residue aspartate 49 participates in Mg(2+) binding. Arginine 146 contributes to the deamido-NAD(+) binding site. Threonine 166 is an ATP binding site. A Mg(2+)-binding site is contributed by glutamate 171. Deamido-NAD(+)-binding residues include lysine 179 and aspartate 186. ATP is bound by residues lysine 195 and threonine 217. A deamido-NAD(+)-binding site is contributed by 266–267 (HK).

Belongs to the NAD synthetase family. In terms of assembly, homodimer.

It carries out the reaction deamido-NAD(+) + NH4(+) + ATP = AMP + diphosphate + NAD(+) + H(+). It participates in cofactor biosynthesis; NAD(+) biosynthesis; NAD(+) from deamido-NAD(+) (ammonia route): step 1/1. Functionally, catalyzes the ATP-dependent amidation of deamido-NAD to form NAD. Uses ammonia as a nitrogen source. The chain is NH(3)-dependent NAD(+) synthetase from Shewanella oneidensis (strain ATCC 700550 / JCM 31522 / CIP 106686 / LMG 19005 / NCIMB 14063 / MR-1).